A 513-amino-acid polypeptide reads, in one-letter code: 2-isopropylmalate synthase (513 aa).

The 263-residue stretch at 4-266 folds into the Pyruvate carboxyltransferase domain; it reads IEFFDTSLRD…KSPLVLAETM (263 aa). Mn(2+)-binding residues include aspartate 13, histidine 201, histidine 203, and asparagine 237. The tract at residues 390-513 is regulatory domain; sequence ILNNVQIDGH…VEQISAHDGI (124 aa).

Belongs to the alpha-IPM synthase/homocitrate synthase family. LeuA type 1 subfamily. As to quaternary structure, homodimer. It depends on Mn(2+) as a cofactor.

The protein resides in the cytoplasm. It carries out the reaction 3-methyl-2-oxobutanoate + acetyl-CoA + H2O = (2S)-2-isopropylmalate + CoA + H(+). Its pathway is amino-acid biosynthesis; L-leucine biosynthesis; L-leucine from 3-methyl-2-oxobutanoate: step 1/4. Its function is as follows. Catalyzes the condensation of the acetyl group of acetyl-CoA with 3-methyl-2-oxobutanoate (2-ketoisovalerate) to form 3-carboxy-3-hydroxy-4-methylpentanoate (2-isopropylmalate). The sequence is that of 2-isopropylmalate synthase from Lactococcus lactis subsp. cremoris (strain SK11).